The chain runs to 146 residues: Large ribosomal subunit protein uL15 (146 aa).

The segment at 1–54 (MKLHELRPAAGSKSAPKRVGRGTGSGLGRNAGKGEKGQNARSGGGVRPGFEGGQ) is disordered. 2 stretches are compositionally biased toward gly residues: residues 21–31 (RGTGSGLGRNA) and 42–52 (SGGGVRPGFEG).

This sequence belongs to the universal ribosomal protein uL15 family. In terms of assembly, part of the 50S ribosomal subunit.

Functionally, binds to the 23S rRNA. This is Large ribosomal subunit protein uL15 from Clostridium perfringens (strain ATCC 13124 / DSM 756 / JCM 1290 / NCIMB 6125 / NCTC 8237 / Type A).